A 300-amino-acid polypeptide reads, in one-letter code: Pantoate--beta-alanine ligase (300 aa).

43 to 50 contributes to the ATP binding site; that stretch reads MGYLHSGH. The active-site Proton donor is histidine 50. Glutamine 74 lines the (R)-pantoate pocket. Residue glutamine 74 participates in beta-alanine binding. 162-165 is an ATP binding site; it reads GQKD. A (R)-pantoate-binding site is contributed by glutamine 168. ATP contacts are provided by residues isoleucine 191 and 199 to 202; that span reads KSSR.

This sequence belongs to the pantothenate synthetase family. As to quaternary structure, homodimer.

It is found in the cytoplasm. The catalysed reaction is (R)-pantoate + beta-alanine + ATP = (R)-pantothenate + AMP + diphosphate + H(+). Its pathway is cofactor biosynthesis; (R)-pantothenate biosynthesis; (R)-pantothenate from (R)-pantoate and beta-alanine: step 1/1. Functionally, catalyzes the condensation of pantoate with beta-alanine in an ATP-dependent reaction via a pantoyl-adenylate intermediate. The sequence is that of Pantoate--beta-alanine ligase (panC) from Dictyostelium discoideum (Social amoeba).